The following is a 203-amino-acid chain: Cytochrome c oxidase assembly protein CtaG (203 aa).

The Cytoplasmic portion of the chain corresponds to 1 to 16 (MADQQEKDQKLKKQQR). A helical; Signal-anchor for type II membrane protein membrane pass occupies residues 17–39 (SNATIAFACLSFFVCMIGAAYAS). The Periplasmic segment spans residues 40–203 (VPLYRIFCQV…VKAETPTNGS (164 aa)).

Belongs to the COX11/CtaG family.

Its subcellular location is the cell inner membrane. Functionally, exerts its effect at some terminal stage of cytochrome c oxidase synthesis, probably by being involved in the insertion of the copper B into subunit I. This is Cytochrome c oxidase assembly protein CtaG from Brucella anthropi (strain ATCC 49188 / DSM 6882 / CCUG 24695 / JCM 21032 / LMG 3331 / NBRC 15819 / NCTC 12168 / Alc 37) (Ochrobactrum anthropi).